We begin with the raw amino-acid sequence, 345 residues long: S-adenosylmethionine:tRNA ribosyltransferase-isomerase (345 aa).

This sequence belongs to the QueA family. Monomer.

Its subcellular location is the cytoplasm. It carries out the reaction 7-aminomethyl-7-carbaguanosine(34) in tRNA + S-adenosyl-L-methionine = epoxyqueuosine(34) in tRNA + adenine + L-methionine + 2 H(+). It participates in tRNA modification; tRNA-queuosine biosynthesis. Its function is as follows. Transfers and isomerizes the ribose moiety from AdoMet to the 7-aminomethyl group of 7-deazaguanine (preQ1-tRNA) to give epoxyqueuosine (oQ-tRNA). The polypeptide is S-adenosylmethionine:tRNA ribosyltransferase-isomerase (Shewanella sp. (strain W3-18-1)).